A 367-amino-acid chain; its full sequence is CCCH-type zinc finger protein moe-3 (367 aa).

The segment covering 1–15 (MSKVKGDLEKSDKRP) has biased composition (basic and acidic residues). Positions 1-57 (MSKVKGDLEKSDKRPPSSMSTGSADSGVFSSGVHASSPSHSQGSSSQSGPPSPTTQL) are disordered. Residues 30 to 49 (SSGVHASSPSHSQGSSSQSG) show a composition bias toward low complexity. Residues 63-92 (ETANLIAVNEQLRKEIAENKQIQTNQMRAL) are a coiled coil. The segment at 107-126 (SISPHHGFPQRPPRGERRMQ) is disordered. 2 consecutive C3H1-type zinc fingers follow at residues 130–158 (SYKTVICQAWLESKTCTFAENCRFAHGEE) and 172–200 (KYKTKLCDKYTTTGLCPYGKRCLFIHPDN). The tract at residues 235 to 268 (NTRNSYNQQPPPMGGLEMQSSPMKSSSDSSHMRS) is disordered. Low complexity predominate over residues 252-268 (MQSSPMKSSSDSSHMRS).

Exclusively expressed in the hermaphrodite gonad. Weakly distributed throughout gonadal oocytes from the mitotic stage to the developing diakinesis stage, with expression restricted to the distal region of the gonad.

Zinc-finger protein that may play a role in oocyte maturation and fertility. This is CCCH-type zinc finger protein moe-3 from Caenorhabditis elegans.